We begin with the raw amino-acid sequence, 553 residues long: Formate--tetrahydrofolate ligase 2 (553 aa).

63-70 (TSAGEGKS) provides a ligand contact to ATP.

It belongs to the formate--tetrahydrofolate ligase family.

It carries out the reaction (6S)-5,6,7,8-tetrahydrofolate + formate + ATP = (6R)-10-formyltetrahydrofolate + ADP + phosphate. The protein operates within one-carbon metabolism; tetrahydrofolate interconversion. The protein is Formate--tetrahydrofolate ligase 2 of Lactobacillus acidophilus (strain ATCC 700396 / NCK56 / N2 / NCFM).